Reading from the N-terminus, the 326-residue chain is N-acetyl-gamma-glutamyl-phosphate reductase (326 aa).

Residue cysteine 155 is part of the active site.

The protein belongs to the NAGSA dehydrogenase family. Type 1 subfamily.

The protein resides in the cytoplasm. The catalysed reaction is N-acetyl-L-glutamate 5-semialdehyde + phosphate + NADP(+) = N-acetyl-L-glutamyl 5-phosphate + NADPH + H(+). It functions in the pathway amino-acid biosynthesis; L-arginine biosynthesis; N(2)-acetyl-L-ornithine from L-glutamate: step 3/4. Catalyzes the NADPH-dependent reduction of N-acetyl-5-glutamyl phosphate to yield N-acetyl-L-glutamate 5-semialdehyde. The sequence is that of N-acetyl-gamma-glutamyl-phosphate reductase from Shewanella baltica (strain OS223).